A 417-amino-acid chain; its full sequence is Exodeoxyribonuclease 7 large subunit (417 aa).

Belongs to the XseA family. In terms of assembly, heterooligomer composed of large and small subunits.

Its subcellular location is the cytoplasm. The catalysed reaction is Exonucleolytic cleavage in either 5'- to 3'- or 3'- to 5'-direction to yield nucleoside 5'-phosphates.. In terms of biological role, bidirectionally degrades single-stranded DNA into large acid-insoluble oligonucleotides, which are then degraded further into small acid-soluble oligonucleotides. This is Exodeoxyribonuclease 7 large subunit from Lactococcus lactis subsp. cremoris (strain MG1363).